The chain runs to 276 residues: Rhomboid protease GlpG (276 aa).

A run of 6 helical transmembrane segments spans residues 96–116 (VTWL…IVGA), 142–162 (AFMH…WYIG), 169–189 (LGSG…GYVQ), 192–212 (FSGP…GYAW), 229–249 (LIAF…GMSM), and 250–270 (ANGA…ADTV). The active-site Nucleophile is the serine 201. Histidine 254 is an active-site residue.

The protein belongs to the peptidase S54 family.

The protein resides in the cell inner membrane. It carries out the reaction Cleaves type-1 transmembrane domains using a catalytic dyad composed of serine and histidine that are contributed by different transmembrane domains.. Its function is as follows. Rhomboid-type serine protease that catalyzes intramembrane proteolysis. The protein is Rhomboid protease GlpG of Citrobacter koseri (strain ATCC BAA-895 / CDC 4225-83 / SGSC4696).